The following is a 364-amino-acid chain: DNA replication and repair protein RecF (364 aa).

30–37 (GENAQGKT) is an ATP binding site.

The protein belongs to the RecF family.

Its subcellular location is the cytoplasm. In terms of biological role, the RecF protein is involved in DNA metabolism; it is required for DNA replication and normal SOS inducibility. RecF binds preferentially to single-stranded, linear DNA. It also seems to bind ATP. This is DNA replication and repair protein RecF from Streptococcus suis (strain 98HAH33).